The primary structure comprises 391 residues: uncharacterized protein (391 aa).

This is an uncharacterized protein from Methanocaldococcus jannaschii (strain ATCC 43067 / DSM 2661 / JAL-1 / JCM 10045 / NBRC 100440) (Methanococcus jannaschii).